The following is a 581-amino-acid chain: Leucine-rich repeat-containing protein 15 (581 aa).

Residues 1 to 21 form the signal peptide; sequence MPLKHYLLLLVGCQAWGAGLA. One can recognise an LRRNT domain in the interval 22 to 53; the sequence is YHGCPSECTCSRASQVECTGARIVAVPTPLPW. Topologically, residues 22–538 are extracellular; sequence YHGCPSECTC…VWGMTQAQSG (517 aa). LRR repeat units follow at residues 54-75, 78-99, 102-123, 126-147, 150-171, 174-195, 198-219, 222-243, 246-267, 270-291, 294-315, 318-339, 342-363, 366-387, and 390-411; these read NAMS…PFLN, ALIA…AFRN, SLRY…LFQG, SLES…HFSQ, NLKE…AFDH, GLTK…VFQH, NLQV…TFDG, NLQE…LFHN, NLQR…VFMQ, QLNR…IFGP, NLRE…VFSN, QLQV…AFNG, ELRE…VFRM, NLQN…IFAN, and GLMA…IFDH. N75 is a glycosylation site (N-linked (GlcNAc...) asparagine). An N-linked (GlcNAc...) asparagine glycan is attached at N369. The LRRCT domain maps to 423–475; it reads NPWRCDSDILPLRNWLLLNQPRLGTDTVPVCFSPANVRGQSLIIINVNVAVPS. The tract at residues 489–509 is disordered; the sequence is WYPDTPSYPDTTSVSSTTELT. Low complexity predominate over residues 499-509; it reads TTSVSSTTELT. Residues 539 to 559 traverse the membrane as a helical segment; the sequence is LAIAAIVIGIVALACSLAACV. Residues 560 to 581 lie on the Cytoplasmic side of the membrane; the sequence is GCCCCKKRSQAVLMQMKAPNEC.

In terms of assembly, (Microbial infection) Interacts with human coronavirus SARS-CoV-2 spike protein (via RBD domain); the interaction is direct and sequesters virions at the cell surface. (Microbial infection) Interacts with human coronavirus SARS-CoV-2 spike protein (via RBD domain); the interaction is direct. As to expression, expressed in brain and placenta. Expressed in lung fibroblasts. Expressed in chodrocytes.

The protein localises to the cell membrane. In terms of biological role, (Microbial infection) Modulates the ability of SARS-CoV-2 to infect host cells through interaction with the spike protein. Does not act as a SARS-CoV-2 entry receptor but sequesters virions and antagonizes in trans SARS-CoV-2 infection of ACE2(+) cells when expressed on nearby cells. The sequence is that of Leucine-rich repeat-containing protein 15 (LRRC15) from Homo sapiens (Human).